Reading from the N-terminus, the 428-residue chain is Gamma-glutamyl phosphate reductase (428 aa).

This sequence belongs to the gamma-glutamyl phosphate reductase family.

The protein localises to the cytoplasm. The enzyme catalyses L-glutamate 5-semialdehyde + phosphate + NADP(+) = L-glutamyl 5-phosphate + NADPH + H(+). It functions in the pathway amino-acid biosynthesis; L-proline biosynthesis; L-glutamate 5-semialdehyde from L-glutamate: step 2/2. Catalyzes the NADPH-dependent reduction of L-glutamate 5-phosphate into L-glutamate 5-semialdehyde and phosphate. The product spontaneously undergoes cyclization to form 1-pyrroline-5-carboxylate. The polypeptide is Gamma-glutamyl phosphate reductase (Agrobacterium fabrum (strain C58 / ATCC 33970) (Agrobacterium tumefaciens (strain C58))).